The chain runs to 351 residues: Translation initiation factor eIF2B subunit beta (351 aa).

This sequence belongs to the eIF-2B alpha/beta/delta subunits family. As to quaternary structure, component of the translation initiation factor 2B (eIF2B) complex which is a heterodecamer of two sets of five different subunits: alpha, beta, gamma, delta and epsilon. Subunits alpha, beta and delta comprise a regulatory subcomplex and subunits epsilon and gamma comprise a catalytic subcomplex. Within the complex, the hexameric regulatory complex resides at the center, with the two heterodimeric catalytic subcomplexes bound on opposite sides.

The protein localises to the cytoplasm. It is found in the cytosol. Its activity is regulated as follows. Activated by the chemical integrated stress response (ISR) inhibitor ISRIB which stimulates guanine nucleotide exchange factor activity for both phosphorylated and unphosphorylated eIF2. Functionally, acts as a component of the translation initiation factor 2B (eIF2B) complex, which catalyzes the exchange of GDP for GTP on eukaryotic initiation factor 2 (eIF2) gamma subunit. Its guanine nucleotide exchange factor activity is repressed when bound to eIF2 complex phosphorylated on the alpha subunit, thereby limiting the amount of methionyl-initiator methionine tRNA available to the ribosome and consequently global translation is repressed. The polypeptide is Translation initiation factor eIF2B subunit beta (EIF2B2) (Bos taurus (Bovine)).